Here is a 298-residue protein sequence, read N- to C-terminus: Ribosomal RNA small subunit methyltransferase H (298 aa).

S-adenosyl-L-methionine contacts are provided by residues 35 to 37 (GGH), Asp55, Phe82, Asp100, and Gln107.

This sequence belongs to the methyltransferase superfamily. RsmH family.

The protein localises to the cytoplasm. It carries out the reaction cytidine(1402) in 16S rRNA + S-adenosyl-L-methionine = N(4)-methylcytidine(1402) in 16S rRNA + S-adenosyl-L-homocysteine + H(+). Specifically methylates the N4 position of cytidine in position 1402 (C1402) of 16S rRNA. The protein is Ribosomal RNA small subunit methyltransferase H of Chlamydia felis (strain Fe/C-56) (Chlamydophila felis).